Here is a 138-residue protein sequence, read N- to C-terminus: Acidic phospholipase A2 RV-7 (138 aa).

The signal sequence occupies residues 1-16 (MRTLWIVAVCLIGVEG). 7 disulfide bridges follow: Cys-42–Cys-131, Cys-44–Cys-60, Cys-59–Cys-111, Cys-65–Cys-138, Cys-66–Cys-104, Cys-73–Cys-97, and Cys-91–Cys-102. Residues Tyr-43, Gly-45, and Gly-47 each coordinate Ca(2+). The active site involves His-63. Asp-64 contacts Ca(2+). Residue Asp-105 is part of the active site.

This sequence belongs to the phospholipase A2 family. Group II subfamily. D49 sub-subfamily. Heterodimer of a weakly toxic basic protein having phospholipase A2 activity (RV-4) and a non-toxic acidic protein which inhibits its enzymatic activity but potentiates its lethal potency and neurotoxicity (RV-7). Requires Ca(2+) as cofactor. Expressed by the venom gland.

The protein resides in the secreted. It catalyses the reaction a 1,2-diacyl-sn-glycero-3-phosphocholine + H2O = a 1-acyl-sn-glycero-3-phosphocholine + a fatty acid + H(+). Heterodimer: RV-4/RV-7 targets the presynaptic sites of the neuromuscular junction. Its function is as follows. Monomer: snake venom phospholipase A2 (PLA2) RV-7 that has low enzymatic activity and is not toxic. It inhibits the enzymatic activity of RV-4 in vitro but potentiates its lethal potency and neurotoxicity. It may facilitate the specific binding of RV-4 to its presynaptic binding sites, probably by acting as a chaperone, minimizing distraction and destruction of RV-4 en route to the site of action by reducing non-specific binding to muscle and other organs. PLA2 catalyzes the calcium-dependent hydrolysis of the 2-acyl groups in 3-sn-phosphoglycerides. The polypeptide is Acidic phospholipase A2 RV-7 (Daboia siamensis (Eastern Russel's viper)).